The primary structure comprises 244 residues: L-xylulose reductase (244 aa).

Met-1 is subject to N-acetylmethionine. NADP(+) is bound at residue 11–39; it reads LVTGAGKGIGRSTVLALKAAGAQVVAVSR. Arg-21 bears the Omega-N-methylarginine mark. Residue Ser-136 coordinates substrate. Tyr-149 functions as the Proton acceptor in the catalytic mechanism. Residue Lys-153 is part of the active site.

Belongs to the short-chain dehydrogenases/reductases (SDR) family. Homotetramer. As to expression, highly expressed in kidney and liver. Expressed in epididymis. Expressed at intermediate level in lung. Weakly expressed in brain, heart, spleen and testis.

The protein localises to the membrane. It catalyses the reaction xylitol + NADP(+) = L-xylulose + NADPH + H(+). Catalyzes the NADPH-dependent reduction of several pentoses, tetroses, trioses, alpha-dicarbonyl compounds and L-xylulose. Participates in the uronate cycle of glucose metabolism. May play a role in the water absorption and cellular osmoregulation in the proximal renal tubules by producing xylitol, an osmolyte, thereby preventing osmolytic stress from occurring in the renal tubules. This Cavia porcellus (Guinea pig) protein is L-xylulose reductase (DCXR).